A 727-amino-acid chain; its full sequence is Elongation factor 2 (727 aa).

Residues 19–260 (DQIRNMGICA…MAIKHLPNPL (242 aa)) form the tr-type G domain. GTP contacts are provided by residues 28–35 (AHIDHGKT), 94–98 (DTPGH), and 148–151 (NKVD). Histidine 603 is subject to Diphthamide.

This sequence belongs to the TRAFAC class translation factor GTPase superfamily. Classic translation factor GTPase family. EF-G/EF-2 subfamily.

The protein resides in the cytoplasm. In terms of biological role, catalyzes the GTP-dependent ribosomal translocation step during translation elongation. During this step, the ribosome changes from the pre-translocational (PRE) to the post-translocational (POST) state as the newly formed A-site-bound peptidyl-tRNA and P-site-bound deacylated tRNA move to the P and E sites, respectively. Catalyzes the coordinated movement of the two tRNA molecules, the mRNA and conformational changes in the ribosome. This chain is Elongation factor 2 (fusA), found in Methanococcus vannielii (strain ATCC 35089 / DSM 1224 / JCM 13029 / OCM 148 / SB).